A 392-amino-acid chain; its full sequence is MSSKVFLRDKVHVNVGTIGHVDHGKTTLTAAITKILSTKGLAENKSYDQIDKTKEEKERGITINTTHVSYETVKRHYAHVDCPGHADYVKNMITGAAQMDAGILVVSAYHGVMPQTREHVLLAGQVGISKLIVFLNKCDLVKEEEWIHLVEMEVRELLNEYKFDGDKTPFVRGSALKALEGTDVEGINKLLEVLDEYIEDPIRDVEKPFLMPVEGVHTITGRGTVATGRVERGKIKISEEVEIIGLKETKKAIITGLEMFKKELDFAQAGDNVGILLRGITRDQIERGQVLAKPGSLNAYHKFLSQVYILTQQEGGRHTAFFSNYRPQFYFRTTDVTGFIKLKKDVKMVLPGDRTELIVELNHPIAIEAGTKFSIREGGRTIGAGTVTEIIE.

Residues Lys10–Ile202 enclose the tr-type G domain. Positions Gly19–Thr26 are G1. Gly19–Thr26 lines the GTP pocket. Thr26 contacts Mg(2+). Residues Gly60–Asn64 form a G2 region. Positions Asp81–Gly84 are G3. GTP contacts are provided by residues Asp81–His85 and Asn136–Asp139. The tract at residues Asn136–Asp139 is G4. Positions Ser174 to Leu176 are G5.

It belongs to the TRAFAC class translation factor GTPase superfamily. Classic translation factor GTPase family. EF-Tu/EF-1A subfamily. In terms of assembly, monomer.

It localises to the cytoplasm. It carries out the reaction GTP + H2O = GDP + phosphate + H(+). Its function is as follows. GTP hydrolase that promotes the GTP-dependent binding of aminoacyl-tRNA to the A-site of ribosomes during protein biosynthesis. This is Elongation factor Tu from Apple proliferation phytoplasma.